The chain runs to 920 residues: Translation initiation factor IF-2 (920 aa).

Composition is skewed to basic and acidic residues over residues 149 to 175, 186 to 197, and 255 to 265; these read EAEMKAAEEARQKEVAAPVVEKEEKPV, AEKKATADKAAK, and AKPEGADDKKK. 2 disordered regions span residues 149–197 and 245–319; these read EAEM…KAAK and EAKK…KQRQ. The span at 301 to 311 shows a compositional bias: gly residues; the sequence is SSGGVGGWRSG. The tr-type G domain maps to 418-585; it reads PRPPVVTVMG…NVLLQAEILE (168 aa). The interval 427 to 434 is G1; that stretch reads GHVDHGKT. GTP is bound at residue 427-434; sequence GHVDHGKT. Positions 452–456 are G2; sequence GITQH. A G3 region spans residues 473-476; the sequence is DTPG. GTP contacts are provided by residues 473–477 and 527–530; these read DTPGH and NKID. Positions 527-530 are G4; that stretch reads NKID. The G5 stretch occupies residues 563 to 565; sequence SAK.

The protein belongs to the TRAFAC class translation factor GTPase superfamily. Classic translation factor GTPase family. IF-2 subfamily.

Its subcellular location is the cytoplasm. One of the essential components for the initiation of protein synthesis. Protects formylmethionyl-tRNA from spontaneous hydrolysis and promotes its binding to the 30S ribosomal subunits. Also involved in the hydrolysis of GTP during the formation of the 70S ribosomal complex. The chain is Translation initiation factor IF-2 from Polynucleobacter asymbioticus (strain DSM 18221 / CIP 109841 / QLW-P1DMWA-1) (Polynucleobacter necessarius subsp. asymbioticus).